Consider the following 365-residue polypeptide: Protein BIIDXI (365 aa).

A signal peptide spans 1–21; that stretch reads MKEMGVIVLLLLHSFFYVAFC. N48, N121, and N208 each carry an N-linked (GlcNAc...) asparagine glycan.

Interacts with PME3. In terms of tissue distribution, mainly expressed in vascular tissues of roots, leaves, stamens and petals.

It localises to the secreted. The protein resides in the cell wall. Together with At5g11420, acts as a positive regulator of PME3 activity during several developmental processes, including reproductive organ development, hypocotyls elongation, seed germination and endosperm (testa) rupture at the micropyle, probably by modulating the pectin methylation status in cell walls. Involved in the regulation of pectin methylation degree to modulate cell wall physiology during cell separation, hypocotyl growth and embryo development. Required during embryo development, especially to regulate homogalacturonans (HG) methyl esterification in endosperm cell walls, a process related to embryo bending. Also implicated in hypocotyl growth and gravitropic response via the regulation of auxin efflux. Also regulates cell wall pectin upon root-knot nematode Meloidogyne incognita infection. The chain is Protein BIIDXI from Arabidopsis thaliana (Mouse-ear cress).